The sequence spans 552 residues: Lon protease 2 (552 aa).

Residue 97-104 coordinates ATP; it reads GPPGVGKT. In terms of domain architecture, Lon proteolytic spans 349–535; it reads EPQVGIVNGL…QEVLDEILVN (187 aa). Active-site residues include serine 445 and lysine 488.

Belongs to the peptidase S16 family. Homohexamer. Organized in a ring with a central cavity.

It localises to the cytoplasm. It carries out the reaction Hydrolysis of proteins in presence of ATP.. In terms of biological role, ATP-dependent serine protease that mediates the selective degradation of mutant and abnormal proteins as well as certain short-lived regulatory proteins. Required for cellular homeostasis and for survival from DNA damage and developmental changes induced by stress. Degrades polypeptides processively to yield small peptide fragments that are 5 to 10 amino acids long. Binds to DNA in a double-stranded, site-specific manner. In Bacillus subtilis (strain 168), this protein is Lon protease 2 (lon2).